The chain runs to 145 residues: UPF0201 protein M164_1168 (145 aa).

The protein belongs to the UPF0201 family.

This Saccharolobus islandicus (strain M.16.4 / Kamchatka #3) (Sulfolobus islandicus) protein is UPF0201 protein M164_1168.